The primary structure comprises 1486 residues: Chromosome partition protein MukB (1486 aa).

An ATP-binding site is contributed by 34 to 41; the sequence is GGNGAGKS. Coiled-coil stretches lie at residues 326 to 418, 444 to 480, and 509 to 603; these read LEAD…QYNQ, LETF…QAYQ, and RHLA…RAPV. The interval 666-783 is flexible hinge; that stretch reads PGGSEDQRLN…EVPLFGRAAR (118 aa). Coiled coils occupy residues 835–923, 977–1115, and 1209–1266; these read EAEI…AKLE, EMLS…TAKA, and VEAI…QNVS.

The protein belongs to the SMC family. MukB subfamily. As to quaternary structure, homodimerization via its hinge domain. Binds to DNA via its C-terminal region. Interacts, and probably forms a ternary complex, with MukE and MukF via its C-terminal region. The complex formation is stimulated by calcium or magnesium. Interacts with tubulin-related protein FtsZ.

It is found in the cytoplasm. Its subcellular location is the nucleoid. Its function is as follows. Plays a central role in chromosome condensation, segregation and cell cycle progression. Functions as a homodimer, which is essential for chromosome partition. Involved in negative DNA supercoiling in vivo, and by this means organize and compact chromosomes. May achieve or facilitate chromosome segregation by condensation DNA from both sides of a centrally located replisome during cell division. In Escherichia coli O157:H7, this protein is Chromosome partition protein MukB.